A 189-amino-acid chain; its full sequence is UPF0301 protein RF_0044 (189 aa).

This sequence belongs to the UPF0301 (AlgH) family.

In Rickettsia felis (strain ATCC VR-1525 / URRWXCal2) (Rickettsia azadi), this protein is UPF0301 protein RF_0044.